Here is a 172-residue protein sequence, read N- to C-terminus: Ribosome maturation factor RimM (172 aa).

A PRC barrel domain is found at 96 to 168; that stretch reads EGEFYYHEII…RVDVEIPEGL (73 aa).

The protein belongs to the RimM family. In terms of assembly, binds ribosomal protein uS19.

It localises to the cytoplasm. Its function is as follows. An accessory protein needed during the final step in the assembly of 30S ribosomal subunit, possibly for assembly of the head region. Essential for efficient processing of 16S rRNA. May be needed both before and after RbfA during the maturation of 16S rRNA. It has affinity for free ribosomal 30S subunits but not for 70S ribosomes. This is Ribosome maturation factor RimM from Streptococcus gordonii (strain Challis / ATCC 35105 / BCRC 15272 / CH1 / DL1 / V288).